A 714-amino-acid chain; its full sequence is EtfAB:quinone oxidoreductase (714 aa).

The next 6 helical transmembrane spans lie at 25-45 (YEWLIYVIMLIPVSVFLFGFW), 87-107 (AGWMHAFLFWGFLVLFLAAGI), 125-145 (IGFSWVVDVLGFLALIGVMVL), 164-184 (DGWIILLIFAILLTGYFIEGL), 207-227 (PFGWMFASFFGSMSVDAMLMW), and 236-256 (MAIAFLFIALVPFTKLWHIFA). 4Fe-4S ferredoxin-type domains lie at 293-324 (WKDLLDLDSCIRCGRCQENCPAYNTGKHLNPK) and 375-405 (YDVVGSETIWDCTNCRACMEHCPMFIEHIPK). 8 residues coordinate [4Fe-4S] cluster: Cys302, Cys305, Cys308, Cys312, Cys386, Cys389, Cys392, and Cys396.

In terms of assembly, might constitute a membrane-associated complex with EtfA (Swol_0697), EtfB (Swol_0696), and the butyryl-CoA dehydrogenase Swol_1933 and/or Swol_2052. It depends on [4Fe-4S] cluster as a cofactor.

The protein localises to the cell membrane. It participates in lipid metabolism; butanoate metabolism. Oxidoreductase involved in syntrophic growth of S.wolfei with butyrate. Is presumed to link the electron flow from butyryl-CoA dehydrogenases to the membrane, in conjunction with the electron transfer flavoprotein EtfAB. May transfer electrons to the menaquinone pool of the membrane. The chain is EtfAB:quinone oxidoreductase from Syntrophomonas wolfei subsp. wolfei (strain DSM 2245B / Goettingen).